The sequence spans 208 residues: Large ribosomal subunit protein uL4 (208 aa).

Residues Arg-45–Gly-85 are disordered. A compositionally biased stretch (basic residues) spans Gln-46 to Arg-66. The span at Gly-69–Ser-80 shows a compositional bias: polar residues.

This sequence belongs to the universal ribosomal protein uL4 family. As to quaternary structure, part of the 50S ribosomal subunit.

Functionally, one of the primary rRNA binding proteins, this protein initially binds near the 5'-end of the 23S rRNA. It is important during the early stages of 50S assembly. It makes multiple contacts with different domains of the 23S rRNA in the assembled 50S subunit and ribosome. Its function is as follows. Forms part of the polypeptide exit tunnel. The sequence is that of Large ribosomal subunit protein uL4 from Chlorobium phaeobacteroides (strain DSM 266 / SMG 266 / 2430).